The chain runs to 392 residues: S-adenosylmethionine synthase (392 aa).

His20 provides a ligand contact to ATP. Position 22 (Asp22) interacts with Mg(2+). A K(+)-binding site is contributed by Glu48. Residues Glu61 and Gln106 each coordinate L-methionine. The flexible loop stretch occupies residues Gln106–Lys116. ATP contacts are provided by residues Asp171–Lys173, Asp248, Arg254–Lys255, Ala271, and Lys275. Asp248 contributes to the L-methionine binding site. Lys279 contacts L-methionine.

It belongs to the AdoMet synthase family. Homotetramer; dimer of dimers. The cofactor is Mg(2+). K(+) serves as cofactor.

It localises to the cytoplasm. The enzyme catalyses L-methionine + ATP + H2O = S-adenosyl-L-methionine + phosphate + diphosphate. Its pathway is amino-acid biosynthesis; S-adenosyl-L-methionine biosynthesis; S-adenosyl-L-methionine from L-methionine: step 1/1. In terms of biological role, catalyzes the formation of S-adenosylmethionine (AdoMet) from methionine and ATP. The overall synthetic reaction is composed of two sequential steps, AdoMet formation and the subsequent tripolyphosphate hydrolysis which occurs prior to release of AdoMet from the enzyme. In Borrelia garinii subsp. bavariensis (strain ATCC BAA-2496 / DSM 23469 / PBi) (Borreliella bavariensis), this protein is S-adenosylmethionine synthase.